The sequence spans 424 residues: Histidinol dehydrogenase (424 aa).

Residues tyrosine 124, glutamine 186, and asparagine 209 each coordinate NAD(+). Substrate contacts are provided by serine 232, glutamine 254, and histidine 257. Zn(2+) contacts are provided by glutamine 254 and histidine 257. Active-site proton acceptor residues include glutamate 322 and histidine 323. Residues histidine 323, aspartate 356, glutamate 410, and histidine 415 each coordinate substrate. Aspartate 356 provides a ligand contact to Zn(2+). Histidine 415 contributes to the Zn(2+) binding site.

This sequence belongs to the histidinol dehydrogenase family. Requires Zn(2+) as cofactor.

It catalyses the reaction L-histidinol + 2 NAD(+) + H2O = L-histidine + 2 NADH + 3 H(+). It participates in amino-acid biosynthesis; L-histidine biosynthesis; L-histidine from 5-phospho-alpha-D-ribose 1-diphosphate: step 9/9. Catalyzes the sequential NAD-dependent oxidations of L-histidinol to L-histidinaldehyde and then to L-histidine. The polypeptide is Histidinol dehydrogenase (Moorella thermoacetica (strain ATCC 39073 / JCM 9320)).